A 249-amino-acid chain; its full sequence is 5'-nucleotidase SurE (249 aa).

A divalent metal cation contacts are provided by aspartate 9, aspartate 10, serine 40, and asparagine 92.

This sequence belongs to the SurE nucleotidase family. Requires a divalent metal cation as cofactor.

It is found in the cytoplasm. The enzyme catalyses a ribonucleoside 5'-phosphate + H2O = a ribonucleoside + phosphate. Functionally, nucleotidase that shows phosphatase activity on nucleoside 5'-monophosphates. The polypeptide is 5'-nucleotidase SurE (Shewanella sp. (strain ANA-3)).